Here is a 597-residue protein sequence, read N- to C-terminus: Aspartate--tRNA(Asp/Asn) ligase (597 aa).

An L-aspartate-binding site is contributed by Glu-175. The tract at residues 199 to 202 is aspartate; it reads QLFK. An L-aspartate-binding site is contributed by Arg-221. ATP is bound by residues 221-223 and Gln-230; that span reads RDE. An L-aspartate-binding site is contributed by His-453. An ATP-binding site is contributed by Glu-487. Arg-494 is an L-aspartate binding site. 539–542 contributes to the ATP binding site; the sequence is GWDR. The interval 562-597 is disordered; the sequence is SGGGVDPLTDAPAPITPEQRKESGIDAKPKKKETKN. Over residues 579-589 the composition is skewed to basic and acidic residues; it reads EQRKESGIDAK.

This sequence belongs to the class-II aminoacyl-tRNA synthetase family. Type 1 subfamily. In terms of assembly, homodimer.

The protein resides in the cytoplasm. The catalysed reaction is tRNA(Asx) + L-aspartate + ATP = L-aspartyl-tRNA(Asx) + AMP + diphosphate. Functionally, aspartyl-tRNA synthetase with relaxed tRNA specificity since it is able to aspartylate not only its cognate tRNA(Asp) but also tRNA(Asn). Reaction proceeds in two steps: L-aspartate is first activated by ATP to form Asp-AMP and then transferred to the acceptor end of tRNA(Asp/Asn). The polypeptide is Aspartate--tRNA(Asp/Asn) ligase (Corynebacterium kroppenstedtii (strain DSM 44385 / JCM 11950 / CIP 105744 / CCUG 35717)).